Here is a 931-residue protein sequence, read N- to C-terminus: Protein unc-45 homolog B (931 aa).

3 TPR repeats span residues 6–39 (AAQL…TKDK), 43–76 (ATLY…NSAD), and 77–110 (IKAL…EPRN). 3 ARM repeats span residues 169–208 (EAGA…GMCS), 211–250 (RARA…AIID), and 751–790 (DKLR…NMVL).

In terms of assembly, interacts with HSP90 in an ATP-independent manner. Interacts with UBE4B; the interaction may target UNC45B for proteasomal degradation. In terms of tissue distribution, highly expressed in adult skeletal muscle and heart. Detected at intermediate levels in lung. Highly expressed in embryonic heart.

Its subcellular location is the cytoplasm. It is found in the myofibril. It localises to the sarcomere. The protein resides in the z line. The protein localises to the a band. Its subcellular location is the perinuclear region. It is found in the cytosol. Functionally, acts as a co-chaperone for HSP90 and is required for proper folding of the myosin motor domain. Plays a role in sarcomere formation during muscle cell development. Is necessary for normal early lens development. This chain is Protein unc-45 homolog B (Unc45b), found in Mus musculus (Mouse).